Here is a 264-residue protein sequence, read N- to C-terminus: uncharacterized protein (264 aa).

Lys-15 to Thr-22 contributes to the ATP binding site.

The protein belongs to the ParA family. MinD subfamily.

This is an uncharacterized protein from Methanocaldococcus jannaschii (strain ATCC 43067 / DSM 2661 / JAL-1 / JCM 10045 / NBRC 100440) (Methanococcus jannaschii).